We begin with the raw amino-acid sequence, 400 residues long: Subtilisin-like protease 7 (400 aa).

An N-terminal signal peptide occupies residues 1 to 20 (MGFITKAIPLALAAASVING). Positions 21–119 (AEIMETRAGV…IERDARVQIN (99 aa)) are excised as a propeptide. The Inhibitor I9 domain maps to 36–118 (KYIVVMNDGM…YIERDARVQI (83 aa)). Asparagine 58 carries N-linked (GlcNAc...) asparagine glycosylation. Residues 129 to 400 (SWGLARVGSK…SKLINNGSGM (272 aa)) form the Peptidase S8 domain. Active-site charge relay system residues include aspartate 161 and histidine 192. Residues asparagine 222 and asparagine 252 are each glycosylated (N-linked (GlcNAc...) asparagine). Catalysis depends on serine 346, which acts as the Charge relay system. Asparagine 396 carries N-linked (GlcNAc...) asparagine glycosylation.

It belongs to the peptidase S8 family.

The protein resides in the secreted. In terms of biological role, secreted subtilisin-like serine protease with keratinolytic activity that contributes to pathogenicity. In Arthroderma benhamiae (Trichophyton mentagrophytes), this protein is Subtilisin-like protease 7 (SUB7).